The sequence spans 339 residues: Dehydrogenase/reductase SDR family member 7 (339 aa).

The N-terminal stretch at 1-28 is a signal peptide; sequence MNWELLLWLLVLCALLLLLVQLLRFLRA. Residues Ser-60 and Ile-62 each coordinate NAD(+). Residue Ser-190 coordinates substrate. NAD(+) is bound by residues Tyr-203, Lys-207, and Ser-239. Tyr-203 functions as the Proton acceptor in the catalytic mechanism.

It belongs to the short-chain dehydrogenases/reductases (SDR) family. As to expression, found predominantly in the adrenal glands, liver, thyroid, prostate, small intestine, colon, stomach, kidney and brain. Lower levels observed in skeletal muscle, the lung and the spleen.

The protein localises to the endoplasmic reticulum membrane. It catalyses the reaction all-trans-retinol + NADP(+) = all-trans-retinal + NADPH + H(+). The enzyme catalyses 5alpha-androstane-3alpha,17beta-diol + NADP(+) = 17beta-hydroxy-5alpha-androstan-3-one + NADPH + H(+). NADPH-dependent oxidoreductase which catalyzes the reduction of a variety of compounds bearing carbonyl groups including steroids, retinoids and xenobiotics. Catalyzes the reduction/inactivation of 5alpha-dihydrotestosterone to 3alpha-androstanediol, with a possible role in the modulation of androgen receptor function. Involved in the reduction of all-trans-retinal to all-trans-retinol. Converts cortisone to 20beta-dihydrocortisone in vitro, although the physiological relevance of this activity is questionable. Reduces exogenous compounds such as quinones (1,2-naphtoquinone, 9,10-phenantrenequinone and benzoquinone) and other xenobiotics (alpha-diketones) in vitro, suggesting a role in the biotransformation of xenobiotics with carbonyl group. A dehydrogenase activity has not been detected so far. May play a role as tumor suppressor. In Homo sapiens (Human), this protein is Dehydrogenase/reductase SDR family member 7.